Here is a 1138-residue protein sequence, read N- to C-terminus: Condensin-2 complex subunit G2 (1138 aa).

Ser30 is modified (phosphoserine). An HEAT repeat occupies Leu459–Cys497. Phosphothreonine is present on Thr1114.

In terms of assembly, component of the condensin-2 complex, which contains the SMC2 and SMC4 heterodimer, and 3 non SMC subunits that probably regulate the complex: NCAPH2, NCAPD3 and NCAPG2. Expressed in spleen, lung and testis as well as in hematopoietic cell lines.

Its subcellular location is the nucleus. Functionally, regulatory subunit of the condensin-2 complex, a complex which establishes mitotic chromosome architecture and is involved in physical rigidity of the chromatid axis. Is required for early embryonic development and is essential for viability and expansion of the inner cell mass (ICM) of the implanting blastocyst. This chain is Condensin-2 complex subunit G2 (Ncapg2), found in Mus musculus (Mouse).